The sequence spans 266 residues: Serine/arginine-rich splicing factor 12 (266 aa).

The interval 42–266 is disordered; the sequence is ARPRRPRAPR…SRSYHHKNSW (225 aa). Over residues 43–62 the composition is skewed to basic residues; it reads RPRRPRAPRPRLRLRGRPGR. The segment covering 102–114 has biased composition (basic and acidic residues); sequence KSKERHLCSPSDH. Positions 115–127 are enriched in basic residues; the sequence is RRSRSPSQRRSRS. Residues 133 to 144 show a composition bias toward basic and acidic residues; the sequence is GRDRRHSDSLKE. Residues 151–166 show a composition bias toward low complexity; it reads SYSQSKSRSKSLPRQS. Positions 183–194 are enriched in basic residues; it reads GRSRSKSLPKRS. 2 stretches are compositionally biased toward polar residues: residues 202–212 and 235–244; these read SRSPQKQTGSG and AYTSSGSKTQ. Residues 245–266 show a composition bias toward basic residues; the sequence is TTKHSHLRSHSRSRSYHHKNSW.

Belongs to the splicing factor SR family.

Its subcellular location is the nucleus. Its function is as follows. Splicing factor that seems to antagonize SR proteins in pre-mRNA splicing regulation. The protein is Serine/arginine-rich splicing factor 12 (Srsf12) of Mus musculus (Mouse).